A 241-amino-acid polypeptide reads, in one-letter code: Ureidoacrylate amidohydrolase RutB (241 aa).

The active-site Proton acceptor is the Asp-38. Lys-147 is a catalytic residue. Residue Cys-180 is the Nucleophile of the active site.

This sequence belongs to the isochorismatase family. RutB subfamily.

The enzyme catalyses (Z)-3-ureidoacrylate + H2O + H(+) = (Z)-3-aminoacrylate + NH4(+) + CO2. It catalyses the reaction (Z)-3-ureidoacrylate + H2O = (Z)-3-aminoacrylate + carbamate + H(+). It carries out the reaction (Z)-2-methylureidoacrylate + H2O + H(+) = (Z)-2-methylaminoacrylate + NH4(+) + CO2. Functionally, hydrolyzes ureidoacrylate to form aminoacrylate and carbamate. The carbamate hydrolyzes spontaneously, thereby releasing one of the nitrogen atoms of the pyrimidine ring as ammonia and one of its carbon atoms as CO2. This Haliangium ochraceum (strain DSM 14365 / JCM 11303 / SMP-2) protein is Ureidoacrylate amidohydrolase RutB.